The chain runs to 130 residues: Small ribosomal subunit protein uS9 (130 aa).

The protein belongs to the universal ribosomal protein uS9 family.

The protein is Small ribosomal subunit protein uS9 of Halorhodospira halophila (strain DSM 244 / SL1) (Ectothiorhodospira halophila (strain DSM 244 / SL1)).